Reading from the N-terminus, the 504-residue chain is Deoxyguanosinetriphosphate triphosphohydrolase (504 aa).

Residues 66-273 form the HD domain; sequence RLTHSLEVQQ…MEAADDISYC (208 aa).

This sequence belongs to the dGTPase family. Type 1 subfamily. In terms of assembly, homotetramer. It depends on Mg(2+) as a cofactor.

It catalyses the reaction dGTP + H2O = 2'-deoxyguanosine + triphosphate + H(+). DGTPase preferentially hydrolyzes dGTP over the other canonical NTPs. This Klebsiella pneumoniae (strain 342) protein is Deoxyguanosinetriphosphate triphosphohydrolase.